The sequence spans 289 residues: Pantothenate synthetase (289 aa).

M30 to H37 provides a ligand contact to ATP. The active-site Proton donor is the H37. A (R)-pantoate-binding site is contributed by Q61. Residue Q61 coordinates beta-alanine. Residue G147–D150 participates in ATP binding. Residue Q153 coordinates (R)-pantoate. ATP contacts are provided by residues V176 and C184–R187.

This sequence belongs to the pantothenate synthetase family. In terms of assembly, homodimer.

The protein localises to the cytoplasm. The enzyme catalyses (R)-pantoate + beta-alanine + ATP = (R)-pantothenate + AMP + diphosphate + H(+). The protein operates within cofactor biosynthesis; (R)-pantothenate biosynthesis; (R)-pantothenate from (R)-pantoate and beta-alanine: step 1/1. Functionally, catalyzes the condensation of pantoate with beta-alanine in an ATP-dependent reaction via a pantoyl-adenylate intermediate. In Allorhizobium ampelinum (strain ATCC BAA-846 / DSM 112012 / S4) (Agrobacterium vitis (strain S4)), this protein is Pantothenate synthetase.